The sequence spans 479 residues: MPRFVDRVVIHTRAGSGGNGCASVHREKFKPLGGPDGGNGGRGGSVVFVVDPQVHTLLDFHFRPHVTAASGKQGMGSNRDGAAGADLEVKVPDGTVVLDDNGRLLADLVGAGTRFEAAAGGRGGLGNAALASRARKAPGFALLGEPGQARDLTLELKTVADVGLVGFPSAGKSSLVSVISAAKPKIADYPFTTLVPNLGVVAAGGHSFTVADVPGLIPGASQGRGLGLDFLRHIERCAVLVHVVNCATAEPGRDPISDIDALEAELAAYQPTLQGDAVLDDLAERPRAVVLNKIDVPEARELAEFVEDELAQRGWPVFLVSTVTRENLQPLIFGLWQMVSEYNAARPQAAPRRPVIRPVPVDDSGFDVQADGHGGFVVTGARPERWIGQTNFDNDEAVGYLADRLVRLGVEEELLRLGAKPGCAVTIGEMTFDWEPQTPAGGHVAMSGRGTDVRLERSDRVGAAERKAARRQRRERDDD.

In terms of domain architecture, Obg spans 2–159 (PRFVDRVVIH…RDLTLELKTV (158 aa)). The OBG-type G domain occupies 160–340 (ADVGLVGFPS…LIFGLWQMVS (181 aa)). GTP-binding positions include 166–173 (GFPSAGKS), 191–195 (FTTLV), 212–215 (DVPG), 292–295 (NKID), and 321–323 (STV). The Mg(2+) site is built by Ser-173 and Thr-193. The OCT domain maps to 358 to 436 (PVPVDDSGFD…IGEMTFDWEP (79 aa)). Positions 438–479 (TPAGGHVAMSGRGTDVRLERSDRVGAAERKAARRQRRERDDD) are disordered. Over residues 451–467 (TDVRLERSDRVGAAERK) the composition is skewed to basic and acidic residues.

Belongs to the TRAFAC class OBG-HflX-like GTPase superfamily. OBG GTPase family. Monomer. The cofactor is Mg(2+).

Its subcellular location is the cytoplasm. An essential GTPase which binds GTP, GDP and possibly (p)ppGpp with moderate affinity, with high nucleotide exchange rates and a fairly low GTP hydrolysis rate. Plays a role in control of the cell cycle, stress response, ribosome biogenesis and in those bacteria that undergo differentiation, in morphogenesis control. The protein is GTPase Obg of Mycobacterium ulcerans (strain Agy99).